The following is a 256-amino-acid chain: Ciliary microtubule associated protein 1A (256 aa).

STPGR repeat units lie at residues 66-92 (PGPGYLVPSNITVKGKDGTPAYSIYGR), 181-206 (PGPGTYRVIDPGTYKHKPPQYSMTAR), and 217-242 (PGPGAYSPEKVVMSKAQAPNFSFGIR). The interval 91 to 115 (GRPRDISSFRTPGPGSYSPERAGKS) is disordered.

This sequence belongs to the CIMAP family.

It is found in the cytoplasm. The protein localises to the cytoskeleton. Its subcellular location is the flagellum axoneme. Functionally, outer dense fibers are filamentous structures located on the outside of the axoneme in the midpiece and principal piece of the mammalian sperm tail. May help to maintain the passive elastic structures and elastic recoil of the sperm tail. The protein is Ciliary microtubule associated protein 1A (cimap1a) of Xenopus laevis (African clawed frog).